Reading from the N-terminus, the 766-residue chain is Serine/threonine-protein kinase PKH1 (766 aa).

The segment at M1–Q52 is disordered. Residues G38–Q52 show a composition bias toward polar residues. A Protein kinase domain is found at F125–F391. Residues S135–S137 and K154 contribute to the ATP site. A PIF-pocket region spans residues L156–F201. Residues E204–A206 and D210 contribute to the ATP site. The active-site Proton acceptor is the D249. The ATP site is built by E253 and D267. Residues S294 and S296 each carry the phosphoserine modification. Over residues T476–N495 the composition is skewed to polar residues. Disordered stretches follow at residues T476–R529 and P725–N745. A compositionally biased stretch (low complexity) spans S511–S521. Positions P735 to N745 are enriched in polar residues.

This sequence belongs to the protein kinase superfamily. AGC Ser/Thr protein kinase family. PDPK1 subfamily.

The enzyme catalyses L-seryl-[protein] + ATP = O-phospho-L-seryl-[protein] + ADP + H(+). It carries out the reaction L-threonyl-[protein] + ATP = O-phospho-L-threonyl-[protein] + ADP + H(+). Functionally, activates YPK1 by phosphorylating of a threonine residue. The polypeptide is Serine/threonine-protein kinase PKH1 (PKH1) (Saccharomyces cerevisiae (strain ATCC 204508 / S288c) (Baker's yeast)).